The following is a 1549-amino-acid chain: Structural maintenance of chromosomes protein 4 (1549 aa).

The interval 1-78 (MPPKTSAAPP…LFSLQLPSRP (78 aa)) is disordered. A compositionally biased stretch (basic residues) spans 26–36 (KPQKKTTKPVN). Residues 37–59 (RHKEGSKDPEEELQRAVNEKFDG) show a composition bias toward basic and acidic residues. 121-128 (GPNGSGKS) serves as a coordination point for ATP. The stretch at 326–604 (MKLEQRRRQR…QNSSCSSSNK (279 aa)) forms a coiled coil. 2 stretches are compositionally biased toward basic and acidic residues: residues 396–407 (LSDLGTEETRRK) and 420–444 (AEAE…AERK). Disordered regions lie at residues 396–444 (LSDL…AERK) and 460–485 (KTAN…EEQK). In terms of domain architecture, SMC hinge spans 619–734 (KSFHGRLGDL…GDSTQEAQRM (116 aa)). Coiled coils occupy residues 786–1058 (KAAE…KVNR) and 1144–1182 (EKIN…SIKA). Polar residues predominate over residues 1440-1459 (IQTTRDVTSRPQSKATTSGD). Residues 1440–1549 (IQTTRDVTSR…AIVDDDDDME (110 aa)) are disordered. Residues 1460–1474 (GTERPASRSASRPES) are compositionally biased toward basic and acidic residues. Residues 1510-1523 (TPPSKRSNSASTPK) show a composition bias toward polar residues.

Belongs to the SMC family. SMC4 subfamily. Component of the condensin I complex, which contains the mix-1/SMC2 and smc-4/SMC4 heterodimer, and three non SMC subunits that probably regulate the complex: dpy-26, capg-1 and dpy-28. Within the complex, interacts with mix-1, dpy-26, capg-1 and dpy-28. Component of the condensin II complex, which contains the mix-1/SMC2 and smc-4/SMC4 heterodimer, and three non SMC subunits, kle-2, capg-2 and hcp-6 that probably regulate the complex. Within the complex, interacts with mix-1, kle-2, capg-2 and hcp-6. Interacts with smcl-1.

The protein localises to the nucleus. It localises to the chromosome. Its function is as follows. Central component of the condensin I complex, a complex required for conversion of interphase chromatin into mitotic-like condense chromosomes. The condensin I complex introduces positive supercoils into relaxed DNA in the presence of type I topoisomerases. Converts nicked DNA into positive knotted forms in the presence of type II topoisomerases. Also a central component of the condensin II complex, a complex that seems to play a role in prophase chromosome condensation. Both the condensin complex I and II play a role in meiotic and mitotic chromosome segregation. Plays a role in robust cytokinesis upon the presence of chromatin obstructions. The polypeptide is Structural maintenance of chromosomes protein 4 (smc-4) (Caenorhabditis elegans).